A 778-amino-acid chain; its full sequence is MDYLWWIVLLIWTLIAPERGTVAQRSKSNVPRLKPSYKEMLESNNLLTFNGLANSSAYHTFLLDEERGRLFVGAKDHVLSFNLVDINMDQQLISWPSSPSRRDECKWAGKDVQKECANFIKVLQPFNQTHLYACGTGAFHPVCAHVEVGKRSEDNTFRLGSSFENGRGKSPYDPKLQTASMLIDGELYAGTSADFMGRDFAIFRTLGKHHPIRTEQHDSRWLNDPRFVSVHLIPESDNAEDDKIYLFFRENAIDGEQISKATHARIGQLCKNDFGGHRSLVNKWTTFLKARLVCSVPGLNGIDTHFDELQDVFLMSSKDPKNPIIYAVFTTSSNIFKGSAVCMYSMADIRRVFLGPYAHRDGPNYQWVPFLNRVPYPRPGTCPSKTFDGFESTKDFPDDVITFARSHPAMYNPVFPINNHPIIIKTDVDYQFTQIVVDRVEAEDGQYDVMFIGTDMGTVLKVVSIPRGTWHDLEEVLLEEMTVFREPTAITAMELSTKQQQLYLGSAIGVSQMPLHRCDVYGKACAECCLARDPYCAWDGSQCSRYFPTAKRRTRRQDIRNGDPLTQCSDLQHHDEADGEAGLLDKTVYGVENSSSFLECSPKSQRALIYWQFQRHGEDHKLEIKSDERVLGTEQGLLIRSLHQKDSGVYYCHAVEHGFIQTLLRLTLNVIPAEHLDDLLHRDPPDTNDPANGKMWYRDFLSLINPPSPNSVDQLCEQVWKRERKQRRQKANLLHASQSHTSQILHSSQSHAKWKLLQENKKGRNRRTHEMQRAPRSV.

The N-terminal stretch at 1-17 is a signal peptide; the sequence is MDYLWWIVLLIWTLIAP. In terms of domain architecture, Sema spans 32–515; that stretch reads RLKPSYKEML…SAIGVSQMPL (484 aa). The N-linked (GlcNAc...) asparagine glycan is linked to Asn-54. Residues Cys-105 and Cys-116 are joined by a disulfide bond. Asn-127 is a glycosylation site (N-linked (GlcNAc...) asparagine). 4 disulfide bridges follow: Cys-134-Cys-143, Cys-270-Cys-382, Cys-294-Cys-342, and Cys-518-Cys-536. Residues 579-668 form the Ig-like C2-type domain; it reads GEAGLLDKTV…FIQTLLRLTL (90 aa). N-linked (GlcNAc...) asparagine glycosylation is present at Asn-593. A disulfide bond links Cys-652 and Cys-716. Residues 727-778 form a disordered region; it reads RRQKANLLHASQSHTSQILHSSQSHAKWKLLQENKKGRNRRTHEMQRAPRSV. A compositionally biased stretch (polar residues) spans 735 to 751; sequence HASQSHTSQILHSSQSH. Residues 756 to 778 show a composition bias toward basic and acidic residues; sequence LLQENKKGRNRRTHEMQRAPRSV.

The protein belongs to the semaphorin family. As to expression, expressed in rhombomeres three and five, and in the posterior half of newly formed somites which is avoided by ventrally extending motor axons.

It localises to the secreted. Might normally influence the midsegmental pathway choice of the ventrally extending motor axons by contributing to a repulsive domain in the posterior somite. The protein is Semaphorin-3ab (sema3ab) of Danio rerio (Zebrafish).